Consider the following 505-residue polypeptide: MADFVGAVDQGTTSTRFMIFDHAGNEVAKHQLEHAQILPRSGWVEHDPVEIWERTNSVIQNALRHGNLSPDDLAAIGITNQRETTVVWDPRNGRPYYNAIVWQDTRTDSIAAALERSGQGDVIRRKAGLPPATYFSGGKIQWILENVDGVREAAEQGHAVFGNTDCWVLWNLTGGPDGGIHATDVTNASRTMLMDLETLDWDDELLGLFDIPRSMLPTINPSSHPEAYGQTRTSRPLRAAIPIAGVLGDQQAATVGQVCYAPGEAKNTYGTGNFLVLNTGTELVRSQHGLLTTVAYQFGDSPAIYALEGSIAVTGSAVQWLRDQMKIIKSAAESETLARTVEDNGGIYFVPAFSGLFAPYWRSDARGAIVGLARYHDNGHLARATLEAICYQSRDVVEAMEQDSGVHLDVLKVDGGVTANDLCMQIQADILGVPVSRPVVAETTALGAAYAAGLATGFWQDTDELRTHWQESKRWEPQWSEDRRAEGYAGWKKAVERTLDWSKVE.

Thr-12 contacts ADP. Residues Thr-12, Thr-13, and Ser-14 each coordinate ATP. A sn-glycerol 3-phosphate-binding site is contributed by Thr-12. ADP is bound at residue Arg-16. Sn-glycerol 3-phosphate is bound by residues Arg-82, Glu-83, Tyr-134, and Asp-249. Residues Arg-82, Glu-83, Tyr-134, Asp-249, and Gln-250 each coordinate glycerol. Residues Thr-271 and Gly-315 each contribute to the ADP site. The ATP site is built by Thr-271, Gly-315, Gln-319, and Gly-416. Positions 416 and 420 each coordinate ADP.

Belongs to the FGGY kinase family.

It carries out the reaction glycerol + ATP = sn-glycerol 3-phosphate + ADP + H(+). It functions in the pathway polyol metabolism; glycerol degradation via glycerol kinase pathway; sn-glycerol 3-phosphate from glycerol: step 1/1. Its activity is regulated as follows. Inhibited by fructose 1,6-bisphosphate (FBP). Key enzyme in the regulation of glycerol uptake and metabolism. Catalyzes the phosphorylation of glycerol to yield sn-glycerol 3-phosphate. This Streptomyces avermitilis (strain ATCC 31267 / DSM 46492 / JCM 5070 / NBRC 14893 / NCIMB 12804 / NRRL 8165 / MA-4680) protein is Glycerol kinase 3.